The chain runs to 382 residues: UDP-4-amino-4-deoxy-L-arabinose--oxoglutarate aminotransferase (382 aa).

Position 183 is an N6-(pyridoxal phosphate)lysine (Lys183).

It belongs to the DegT/DnrJ/EryC1 family. ArnB subfamily. In terms of assembly, homodimer. Pyridoxal 5'-phosphate serves as cofactor.

The enzyme catalyses UDP-4-amino-4-deoxy-beta-L-arabinose + 2-oxoglutarate = UDP-beta-L-threo-pentopyranos-4-ulose + L-glutamate. It participates in nucleotide-sugar biosynthesis; UDP-4-deoxy-4-formamido-beta-L-arabinose biosynthesis; UDP-4-deoxy-4-formamido-beta-L-arabinose from UDP-alpha-D-glucuronate: step 2/3. The protein operates within bacterial outer membrane biogenesis; lipopolysaccharide biosynthesis. Its function is as follows. Catalyzes the conversion of UDP-4-keto-arabinose (UDP-Ara4O) to UDP-4-amino-4-deoxy-L-arabinose (UDP-L-Ara4N). The modified arabinose is attached to lipid A and is required for resistance to polymyxin and cationic antimicrobial peptides. In Pseudomonas fluorescens (strain Pf0-1), this protein is UDP-4-amino-4-deoxy-L-arabinose--oxoglutarate aminotransferase.